The following is a 359-amino-acid chain: Pyruvate dehydrogenase E1 component subunit beta, mitochondrial (359 aa).

Residues 1–19 (MLGVIRNKTIRPSFSAFRF) constitute a mitochondrion transit peptide. Thiamine diphosphate is bound at residue glutamate 82. Residues isoleucine 135, alanine 183, isoleucine 184, and aspartate 186 each coordinate K(+).

As to quaternary structure, tetramer of 2 alpha and 2 beta subunits. Requires thiamine diphosphate as cofactor.

The protein localises to the mitochondrion matrix. It carries out the reaction N(6)-[(R)-lipoyl]-L-lysyl-[protein] + pyruvate + H(+) = N(6)-[(R)-S(8)-acetyldihydrolipoyl]-L-lysyl-[protein] + CO2. Functionally, the pyruvate dehydrogenase complex catalyzes the overall conversion of pyruvate to acetyl-CoA and CO(2). It contains multiple copies of three enzymatic components: pyruvate dehydrogenase (E1), dihydrolipoamide acetyltransferase (E2) and lipoamide dehydrogenase (E3). The protein is Pyruvate dehydrogenase E1 component subunit beta, mitochondrial of Pisum sativum (Garden pea).